The sequence spans 212 residues: Interleukin-6 (212 aa).

An N-terminal signal peptide occupies residues 1-29 (MTSFSTSAFRPVAFSLGLLLVMPAAFPAP). Cys-72 and Cys-78 are disulfide-bonded. Asn-73 is a glycosylation site (N-linked (GlcNAc...) asparagine). Ser-81 bears the Phosphoserine mark. A disulfide bridge links Cys-101 with Cys-111. N-linked (GlcNAc...) asparagine glycosylation is found at Asn-160 and Asn-172.

This sequence belongs to the IL-6 superfamily. As to quaternary structure, component of a hexamer of two molecules each of IL6, IL6R and IL6ST; first binds to IL6R to associate with the signaling subunit IL6ST. Interacts with IL6R (via the N-terminal ectodomain); this interaction may be affected by IL6R-binding with SORL1, hence decreasing IL6 cis signaling. Interacts with SORL1 (via the N-terminal ectodomain); this interaction leads to IL6 internalization and lysosomal degradation. May form a trimeric complex with the soluble SORL1 ectodomain and soluble IL6R receptor; this interaction might stabilize circulating IL6, hence promoting IL6 trans signaling.

Its subcellular location is the secreted. In terms of biological role, cytokine with a wide variety of biological functions in immunity, tissue regeneration, and metabolism. Binds to IL6R, then the complex associates to the signaling subunit IL6ST/gp130 to trigger the intracellular IL6-signaling pathway. The interaction with the membrane-bound IL6R and IL6ST stimulates 'classic signaling', whereas the binding of IL6 and soluble IL6R to IL6ST stimulates 'trans-signaling'. Alternatively, 'cluster signaling' occurs when membrane-bound IL6:IL6R complexes on transmitter cells activate IL6ST receptors on neighboring receiver cells. IL6 is a potent inducer of the acute phase response. Rapid production of IL6 contributes to host defense during infection and tissue injury, but excessive IL6 synthesis is involved in disease pathology. In the innate immune response, is synthesized by myeloid cells, such as macrophages and dendritic cells, upon recognition of pathogens through toll-like receptors (TLRs) at the site of infection or tissue injury. In the adaptive immune response, is required for the differentiation of B cells into immunoglobulin-secreting cells. Plays a major role in the differentiation of CD4(+) T cell subsets. Essential factor for the development of T follicular helper (Tfh) cells that are required for the induction of germinal-center formation. Required to drive naive CD4(+) T cells to the Th17 lineage. Also required for proliferation of myeloma cells and the survival of plasmablast cells. Functionally, acts as an essential factor in bone homeostasis and on vessels directly or indirectly by induction of VEGF, resulting in increased angiogenesis activity and vascular permeability. Induces, through 'trans-signaling' and synergistically with IL1B and TNF, the production of VEGF. Involved in metabolic controls, is discharged into the bloodstream after muscle contraction increasing lipolysis and improving insulin resistance. 'Trans-signaling' in central nervous system also regulates energy and glucose homeostasis. Mediates, through GLP-1, crosstalk between insulin-sensitive tissues, intestinal L cells and pancreatic islets to adapt to changes in insulin demand. Also acts as a myokine. Plays a protective role during liver injury, being required for maintenance of tissue regeneration. Also has a pivotal role in iron metabolism by regulating HAMP/hepcidin expression upon inflammation or bacterial infection. Through activation of IL6ST-YAP-NOTCH pathway, induces inflammation-induced epithelial regeneration. This chain is Interleukin-6 (IL6), found in Saimiri sciureus (Common squirrel monkey).